Here is a 182-residue protein sequence, read N- to C-terminus: Probable peptidyl-prolyl cis-trans isomerase A (182 aa).

The 169-residue stretch at 13-181 (QNATATLHTN…EPVVIDSITI (169 aa)) folds into the PPIase cyclophilin-type domain. The tract at residues 161–182 (TTATDGNDRPTEPVVIDSITIS) is disordered.

This sequence belongs to the cyclophilin-type PPIase family.

It localises to the cytoplasm. It carries out the reaction [protein]-peptidylproline (omega=180) = [protein]-peptidylproline (omega=0). In terms of biological role, PPIases accelerate the folding of proteins. It catalyzes the cis-trans isomerization of proline imidic peptide bonds in oligopeptides. In Mycobacterium leprae (strain TN), this protein is Probable peptidyl-prolyl cis-trans isomerase A (ppiA).